The following is a 678-amino-acid chain: GAS2-like protein 1 (678 aa).

Ala2 bears the N-acetylalanine mark. A Calponin-homology (CH) domain is found at 27-148 (EAMKEDLADW…CLLEVARRGA (122 aa)). Residues 203 to 275 (NDLRNLDELV…HYLDKHDPCR (73 aa)) enclose the GAR domain. Residues 276 to 291 (CSSSTHRLPQQRTGTF) are compositionally biased toward polar residues. Disordered stretches follow at residues 276–524 (CSSS…FRRL) and 538–678 (AASH…DSSM). Phosphoserine occurs at positions 306 and 316. Basic and acidic residues predominate over residues 327–340 (GTKEGPETPLRPRD). Phosphothreonine is present on Thr334. Residues Ser352 and Ser355 each carry the phosphoserine modification. Residues 354-365 (DSDSSASSAQSG) show a composition bias toward low complexity. The span at 370-381 (RSDDSATGSRRE) shows a compositional bias: basic and acidic residues. Over residues 392-403 (PASPRRPTAPRS) the composition is skewed to low complexity. A Phosphoserine modification is found at Ser394. Over residues 404 to 413 (QSRDRLDRGR) the composition is skewed to basic and acidic residues. Residues Ser436 and Ser438 each carry the phosphoserine modification. Residues 437–454 (QSREEQAVLMVRRDRDGQ) are compositionally biased toward basic and acidic residues. Residues 461-471 (GRGGGGSGGSG) show a composition bias toward gly residues. Phosphoserine occurs at positions 482 and 489. Residues 485–495 (APRPSRGPSPG) show a composition bias toward pro residues. An Omega-N-methylarginine modification is found at Arg490. Position 493 is a phosphoserine (Ser493). The residue at position 501 (Thr501) is a Phosphothreonine. Arg507 is subject to Omega-N-methylarginine. Low complexity-rich tracts occupy residues 509-519 (PLQLDPQQEQQ) and 554-568 (DSAYCSSSSSSSSLS). At Arg630 the chain carries Omega-N-methylarginine. Positions 631–641 (GRMDTQPDRKP) are enriched in basic and acidic residues. A Phosphoserine modification is found at Ser654. The segment covering 666–678 (HSVTPRTEPDSSM) has biased composition (polar residues).

This sequence belongs to the GAS2 family. In terms of assembly, interacts with MAPRE1.

It localises to the cytoplasm. Its subcellular location is the cytoskeleton. The protein localises to the stress fiber. Seems to be involved in the cross-linking of microtubules and microfilaments. Regulates microtubule dynamics and stability by interacting with microtubule plus-end tracking proteins, such as MAPRE1, to regulate microtubule growth along actin stress fibers. The sequence is that of GAS2-like protein 1 (Gas2l1) from Mus musculus (Mouse).